Consider the following 737-residue polypeptide: MLCNRLHKAAFAARLRPRLPATVASCRQVHNSDGTISEKRIRNIGILAHIDAGKTTTTERMLYYSGRTDMLGEVKLGNTVTDFLQQERERGITICSAAVSFNWKEYRINLLDTPGHIDFTMEVEQSLGAVDGTVIILDGSAGVEAQTVTVWGQADRHRLPRLVFVNKMDKESADFDACLEDLEKKLSTVPVPLQMPIKEAGKLVGVIDVLSASQIIWDSKGKGRSYKAIPISDEQLHDQVQEKLYELIDLLSGMDDNLAQAIIEANSLENVKLNLVLDALRNCTLKQQIVPVLLGSSYKNVGVQLLMDSVLNFLPAPSERNQIYDLTNSQARIEGDFINVSTFRNDFVGKVFKVTHDKQRGPITMIRAFRGTVKKGSKFITATGGSETIQRIYEPLADEYREIESFGAGNIGLCAGPKSTVTGDLLLLASKLGLQTTIPDAVYFCSIEPPSSGQQSALDNALREIQREDPSLRVRYDEVTGQTVLGGMGQLHLEIVKSRILTEYRIDADLGPLQIAYKETLDEPCRGEWRAEKEIAGSKQSVYMDMTIHPSTASESNEERIVLDNSAEAQETLKLVRPRQMTFFRKGALAALQRGPKLGGQLANCTIKLHALTIGKGTADPFIMAASAQCIGNILANARCRLLEPDMFLEIVTPSEYLPPILADLSRRRARIEDVAPRGSANKVVTVIAPLAELGDYSTVLRTISSGTASVSMEPNGHSPLNESDEAQAMRRALGLE.

The transit peptide at 1 to 36 (MLCNRLHKAAFAARLRPRLPATVASCRQVHNSDGTI) directs the protein to the mitochondrion. The 280-residue stretch at 39–318 (KRIRNIGILA…SVLNFLPAPS (280 aa)) folds into the tr-type G domain. GTP contacts are provided by residues 48–55 (AHIDAGKT), 112–116 (DTPGH), and 166–169 (NKMD).

The protein belongs to the TRAFAC class translation factor GTPase superfamily. Classic translation factor GTPase family. EF-G/EF-2 subfamily.

Its subcellular location is the mitochondrion. Its function is as follows. Mitochondrial GTPase that mediates the disassembly of ribosomes from messenger RNA at the termination of mitochondrial protein biosynthesis. Not involved in the GTP-dependent ribosomal translocation step during translation elongation. The chain is Ribosome-releasing factor 2, mitochondrial from Anopheles gambiae (African malaria mosquito).